The following is a 194-amino-acid chain: Heme transporter hrg-1 (194 aa).

4 helical membrane passes run glutamine 45–isoleucine 65, isoleucine 71–leucine 91, glycine 113–isoleucine 133, and leucine 143–alanine 163. A Di-leucine motif motif is present at residues leucine 182–leucine 183.

The protein belongs to the HRG family. As to expression, specifically expressed in the intestinal cells in larvae and adults.

The protein localises to the endosome membrane. It localises to the lysosome membrane. Its function is as follows. Heme transporter that regulates intracellular heme availability through the endosomal or lysosomal compartment. The chain is Heme transporter hrg-1 (hrg-1) from Caenorhabditis elegans.